The primary structure comprises 145 residues: Large ribosomal subunit protein uL15 (145 aa).

Residues 1-13 (MNLHELKYNEGAR) are compositionally biased toward basic and acidic residues. A disordered region spans residues 1 to 56 (MNLHELKYNEGARKEKHRVGRGHAAGKGKQAGKGQSGQLKRTGSKPGFEGGQNPWY). The segment covering 14–26 (KEKHRVGRGHAAG) has biased composition (basic residues).

The protein belongs to the universal ribosomal protein uL15 family. As to quaternary structure, part of the 50S ribosomal subunit.

Binds to the 23S rRNA. The sequence is that of Large ribosomal subunit protein uL15 from Mycoplasma mobile (strain ATCC 43663 / 163K / NCTC 11711) (Mesomycoplasma mobile).